The following is a 614-amino-acid chain: Protein B602L (614 aa).

Tandem repeats lie at residues C161–T164, N165–T168, S169–T172, N173–T176, S177–T180, N181–I184, N185–T188, N189–T192, C193–T196, N197–T200, N201–T204, N205–I208, N209–T212, N213–T216, N217–T220, N221–T224, N225–I228, N229–T232, N233–T236, C237–T240, N241–T244, N245–T248, N249–I252, N253–T256, N257–T260, N261–T264, N265–I268, N269–T272, N273–I276, N277–I280, and N281–T284. A 28 X 4 AA tandem repeats of [CNS]-[AV]-[DNS]-[IT] region spans residues C161–T284.

The protein belongs to the asfivirus B602L family.

It is found in the host cytoplasm. In terms of biological role, plays an essential role in the assembly of the icosahedral capsid of the virus. Allows the assembly of 3 molecules of hexon protein p72 and formation of a thermostable trimer. The polypeptide is Protein B602L (African swine fever virus (isolate Tick/Malawi/Lil 20-1/1983) (ASFV)).